The chain runs to 593 residues: Serine/threonine-protein kinase PAK 4 (593 aa).

In terms of domain architecture, CRIB spans 11 to 24 (ISAPSNFEHRVHTG). A linker region spans residues 25–322 (FDQHEQKFTG…VVDPGDPRSY (298 aa)). Serine 41 is subject to Phosphoserine. Lysine 78 carries the N6-methyllysine modification. Residues 95-303 (TRSNSLRRES…PQREPQRVSH (209 aa)) form a disordered region. Serine 104 carries the post-translational modification Phosphoserine. Basic and acidic residues predominate over residues 118–133 (LEERAAPARMAPDKAG). The residue at position 148 (serine 148) is a Phosphoserine. Residues 149–164 (GDRRRVGPEKRPKSSR) show a composition bias toward basic and acidic residues. Serine 181 is modified (phosphoserine). Residues 184–197 (DVSTPQPGSLTSGT) are compositionally biased toward polar residues. A Phosphothreonine modification is found at threonine 187. Serine 195 is subject to Phosphoserine. Threonine 207 is subject to Phosphothreonine. Residues 238–258 (AAPQSSSSSRPPTRARGAPSP) are compositionally biased toward low complexity. Phosphoserine is present on residues serine 257 and serine 266. Residues 267–280 (EPQLAPPARALAAP) show a composition bias toward low complexity. Residues 281–292 (AVPPAPGPPGPR) show a composition bias toward pro residues. Serine 293 carries the post-translational modification Phosphoserine. Positions 294–303 (PQREPQRVSH) are enriched in basic and acidic residues. The region spanning 323-574 (LDNFIKIGEG…AAELLKHPFL (252 aa)) is the Protein kinase domain. Residues 329–337 (IGEGSTGIV) and lysine 352 contribute to the ATP site. Aspartate 442 functions as the Proton acceptor in the catalytic mechanism. Residue serine 476 is modified to Phosphoserine; by autocatalysis.

The protein belongs to the protein kinase superfamily. STE Ser/Thr protein kinase family. STE20 subfamily. As to quaternary structure, interacts tightly with GTP-bound but not GDP-bound CDC42/p21 and weakly with RAC1. Interacts with FGFR2 and GRB2. Interacts with INKA1. Interacts with SH3RF2. Interacts with RHOU and PAXI; the PAK4-RHOU complex protects RHOU from ubiquitination and acts as a scaffold to suppport paxillin/PAXI phosphorylation. Post-translationally, autophosphorylated on serine residues when activated by CDC42/p21. Phosphorylated on tyrosine residues upon stimulation of FGFR2. Methylated by SETD6. Polyubiquitinated, leading to its proteasomal degradation.

The protein resides in the cytoplasm. The catalysed reaction is L-seryl-[protein] + ATP = O-phospho-L-seryl-[protein] + ADP + H(+). It carries out the reaction L-threonyl-[protein] + ATP = O-phospho-L-threonyl-[protein] + ADP + H(+). Inhibited by INKA1; which inhibits the serine/threonine-protein kinase activity by binding PAK4 in a substrate-like manner. Functionally, serine/threonine protein kinase that plays a role in a variety of different signaling pathways including cytoskeleton regulation, cell migration, growth, proliferation or cell survival. Activation by various effectors including growth factor receptors or active CDC42 and RAC1 results in a conformational change and a subsequent autophosphorylation on several serine and/or threonine residues. Phosphorylates and inactivates the protein phosphatase SSH1, leading to increased inhibitory phosphorylation of the actin binding/depolymerizing factor cofilin. Decreased cofilin activity may lead to stabilization of actin filaments. Phosphorylates LIMK1, a kinase that also inhibits the activity of cofilin. Phosphorylates integrin beta5/ITGB5 and thus regulates cell motility. Phosphorylates ARHGEF2 and activates the downstream target RHOA that plays a role in the regulation of assembly of focal adhesions and actin stress fibers. Stimulates cell survival by phosphorylating the BCL2 antagonist of cell death BAD. Alternatively, inhibits apoptosis by preventing caspase-8 binding to death domain receptors in a kinase independent manner. Plays a role in cell-cycle progression by controlling levels of the cell-cycle regulatory protein CDKN1A and by phosphorylating RAN. Promotes kinase-independent stabilization of RHOU, thereby contributing to focal adhesion disassembly during cell migration. This Mus musculus (Mouse) protein is Serine/threonine-protein kinase PAK 4.